Consider the following 444-residue polypeptide: CCA-adding enzyme (444 aa).

ATP is bound by residues Ser-57 and Arg-60. The CTP site is built by Ser-57 and Arg-60. The Mg(2+) site is built by Asp-69, Asp-71, and Asp-124. 3 residues coordinate ATP: His-147, Lys-168, and Tyr-177. CTP is bound by residues His-147, Lys-168, and Tyr-177.

This sequence belongs to the tRNA nucleotidyltransferase/poly(A) polymerase family. Archaeal CCA-adding enzyme subfamily. In terms of assembly, homodimer. Mg(2+) serves as cofactor.

It catalyses the reaction a tRNA precursor + 2 CTP + ATP = a tRNA with a 3' CCA end + 3 diphosphate. It carries out the reaction a tRNA with a 3' CCA end + 2 CTP + ATP = a tRNA with a 3' CCACCA end + 3 diphosphate. In terms of biological role, catalyzes the addition and repair of the essential 3'-terminal CCA sequence in tRNAs without using a nucleic acid template. Adds these three nucleotides in the order of C, C, and A to the tRNA nucleotide-73, using CTP and ATP as substrates and producing inorganic pyrophosphate. tRNA 3'-terminal CCA addition is required both for tRNA processing and repair. Also involved in tRNA surveillance by mediating tandem CCA addition to generate a CCACCA at the 3' terminus of unstable tRNAs. While stable tRNAs receive only 3'-terminal CCA, unstable tRNAs are marked with CCACCA and rapidly degraded. This is CCA-adding enzyme from Methanococcus maripaludis (strain C7 / ATCC BAA-1331).